The sequence spans 217 residues: Cytidylate kinase (217 aa).

10-18 (GPAGAGKST) lines the ATP pocket.

It belongs to the cytidylate kinase family. Type 1 subfamily.

It localises to the cytoplasm. It carries out the reaction CMP + ATP = CDP + ADP. The catalysed reaction is dCMP + ATP = dCDP + ADP. This is Cytidylate kinase from Alkaliphilus oremlandii (strain OhILAs) (Clostridium oremlandii (strain OhILAs)).